The following is a 213-amino-acid chain: Adenylate kinase (213 aa).

10 to 15 (GAGKGT) serves as a coordination point for ATP. Positions 30–59 (STGNLLRDEVKSKTDLGVDIEKLISNGKFV) are NMP. AMP contacts are provided by residues threonine 31, arginine 36, 57–59 (KFV), 85–88 (GYPR), and glutamine 92. Positions 126–162 (GRMTCEKCNMTLNEYFNKEQIELHPCGVEHLKKRKDD) are LID. ATP is bound at residue arginine 127. Residues arginine 159 and arginine 170 each contribute to the AMP site. Glycine 198 contributes to the ATP binding site.

This sequence belongs to the adenylate kinase family. In terms of assembly, monomer.

It is found in the cytoplasm. It catalyses the reaction AMP + ATP = 2 ADP. It participates in purine metabolism; AMP biosynthesis via salvage pathway; AMP from ADP: step 1/1. Its function is as follows. Catalyzes the reversible transfer of the terminal phosphate group between ATP and AMP. Plays an important role in cellular energy homeostasis and in adenine nucleotide metabolism. The polypeptide is Adenylate kinase (Pelagibacter ubique (strain HTCC1062)).